A 130-amino-acid chain; its full sequence is uncharacterized protein (130 aa).

An HTH cro/C1-type domain is found at 19–73; that stretch reads IYSLRLAKGLSRQQLAEVIDVTHQQLQKYEKAINRISVGRLVLIAEALDRNIDYF. The H-T-H motif DNA-binding region spans 30 to 49; it reads RQQLAEVIDVTHQQLQKYEK.

This is an uncharacterized protein from Rickettsia prowazekii (strain Madrid E).